Reading from the N-terminus, the 169-residue chain is Peptide methionine sulfoxide reductase MsrA (169 aa).

Cys10 is an active-site residue.

It belongs to the MsrA Met sulfoxide reductase family.

It catalyses the reaction L-methionyl-[protein] + [thioredoxin]-disulfide + H2O = L-methionyl-(S)-S-oxide-[protein] + [thioredoxin]-dithiol. The catalysed reaction is [thioredoxin]-disulfide + L-methionine + H2O = L-methionine (S)-S-oxide + [thioredoxin]-dithiol. Its function is as follows. Has an important function as a repair enzyme for proteins that have been inactivated by oxidation. Catalyzes the reversible oxidation-reduction of methionine sulfoxide in proteins to methionine. This is Peptide methionine sulfoxide reductase MsrA from Streptococcus agalactiae serotype Ia (strain ATCC 27591 / A909 / CDC SS700).